Here is a 399-residue protein sequence, read N- to C-terminus: Fructose-1,6-bisphosphate aldolase/phosphatase (399 aa).

Catalysis depends on aspartate 11, which acts as the Proton acceptor; for FBP phosphatase activity. Mg(2+) contacts are provided by aspartate 11, histidine 18, aspartate 52, and aspartate 53. Residue histidine 18 participates in beta-D-fructose 1,6-bisphosphate binding. Dihydroxyacetone phosphate is bound at residue histidine 18. Tyrosine 91 lines the beta-D-fructose 1,6-bisphosphate pocket. Glutamine 95 serves as a coordination point for Mg(2+). Residue 104 to 105 (GN) coordinates beta-D-fructose 1,6-bisphosphate. A Mg(2+)-binding site is contributed by aspartate 132. Lysine 133 is a binding site for beta-D-fructose 1,6-bisphosphate. Position 133 (lysine 133) interacts with dihydroxyacetone phosphate. Tyrosine 229 functions as the Proton donor/acceptor; for FBP aldolase activity in the catalytic mechanism. Residues lysine 232, aspartate 233, and aspartate 234 each contribute to the Mg(2+) site. Lysine 232 functions as the Schiff-base intermediate with DHAP; for FBP aldolase activity in the catalytic mechanism. Beta-D-fructose 1,6-bisphosphate is bound by residues 242-243 (QS), arginine 266, aspartate 297, and tyrosine 358. 2 residues coordinate dihydroxyacetone phosphate: arginine 266 and aspartate 297.

Belongs to the FBP aldolase/phosphatase family. As to quaternary structure, homooctamer; dimer of tetramers. Mg(2+) is required as a cofactor.

The enzyme catalyses beta-D-fructose 1,6-bisphosphate + H2O = beta-D-fructose 6-phosphate + phosphate. It carries out the reaction beta-D-fructose 1,6-bisphosphate = D-glyceraldehyde 3-phosphate + dihydroxyacetone phosphate. Its pathway is carbohydrate biosynthesis; gluconeogenesis. Functionally, catalyzes two subsequent steps in gluconeogenesis: the aldol condensation of dihydroxyacetone phosphate (DHAP) and glyceraldehyde-3-phosphate (GA3P) to fructose-1,6-bisphosphate (FBP), and the dephosphorylation of FBP to fructose-6-phosphate (F6P). The polypeptide is Fructose-1,6-bisphosphate aldolase/phosphatase (Pyrobaculum neutrophilum (strain DSM 2338 / JCM 9278 / NBRC 100436 / V24Sta) (Thermoproteus neutrophilus)).